Reading from the N-terminus, the 1358-residue chain is DNA-directed RNA polymerase subunit beta (1358 aa).

This sequence belongs to the RNA polymerase beta chain family. In terms of assembly, the RNAP catalytic core consists of 2 alpha, 1 beta, 1 beta' and 1 omega subunit. When a sigma factor is associated with the core the holoenzyme is formed, which can initiate transcription.

The enzyme catalyses RNA(n) + a ribonucleoside 5'-triphosphate = RNA(n+1) + diphosphate. Functionally, DNA-dependent RNA polymerase catalyzes the transcription of DNA into RNA using the four ribonucleoside triphosphates as substrates. This chain is DNA-directed RNA polymerase subunit beta, found in Francisella tularensis subsp. mediasiatica (strain FSC147).